Consider the following 1755-residue polypeptide: Transposon Ty1-GR2 Gag-Pol polyprotein (1755 aa).

The span at 1–16 shows a compositional bias: low complexity; it reads MESQQLSQHSHISHGS. Disordered regions lie at residues 1 to 93, 126 to 173, and 352 to 421; these read MESQ…MMTQ, PQSQ…RPPP, and GSRN…SKST. Composition is skewed to polar residues over residues 48-60 and 127-152; these read TKAN…TPAS and QSQF…GNTF. The segment covering 153–165 has biased composition (low complexity); sequence TDSSSADSDMTST. Residues 299–401 form an RNA-binding region; the sequence is NNGIHINNKV…NSKSKTARAH (103 aa). Low complexity predominate over residues 402 to 418; sequence NVSTSNNSPSTDNDSIS. Serine 416 carries the phosphoserine modification. The For protease activity; shared with dimeric partner role is filled by aspartate 461. An integrase-type zinc finger-like region spans residues 583–640; it reads NVHTSESTRKYPYPFIHRMLAHANAQTIRYSLKNNTITYFNESDVDWSSAIDYQCPDC. The region spanning 660-835 is the Integrase catalytic domain; that stretch reads NSYEPFQYLH…AGLDISTLLP (176 aa). Aspartate 671 and aspartate 736 together coordinate Mg(2+). Disordered regions lie at residues 956 to 1087, 1092 to 1111, and 1130 to 1187; these read SKAV…ETEK, RSPS…NIVP, and DLPL…DNET. Over residues 960–969 the composition is skewed to low complexity; sequence SPTDSTPPST. Positions 1005-1015 are enriched in polar residues; it reads STPQISNIEST. Residues 1038–1053 show a composition bias toward basic and acidic residues; that stretch reads ESSHASKSKDFRHSDS. 2 stretches are compositionally biased toward polar residues: residues 1054–1082 and 1101–1111; these read YSEN…QISD and PENNSSHNIVP. Residues 1178-1212 carry the Bipartite nuclear localization signal motif; it reads KKRSLEDNETEIKVSRDTWNTKNMRSLEPPRSKKR. One can recognise a Reverse transcriptase Ty1/copia-type domain in the interval 1338–1476; sequence NNYYITQLDI…DILGLEIKYQ (139 aa). Mg(2+) contacts are provided by aspartate 1346, aspartate 1427, aspartate 1428, aspartate 1610, glutamate 1652, and aspartate 1685. Positions 1610 to 1752 constitute an RNase H Ty1/copia-type domain; the sequence is DASYGNQPYY…IKTFKLLTNK (143 aa).

In terms of assembly, the capsid protein forms a homotrimer, from which the VLPs are assembled. The protease is a homodimer, whose active site consists of two apposed aspartic acid residues. In terms of processing, initially, virus-like particles (VLPs) are composed of the structural unprocessed proteins Gag and Gag-Pol, and also contain the host initiator methionine tRNA (tRNA(i)-Met) which serves as a primer for minus-strand DNA synthesis, and a dimer of genomic Ty RNA. Processing of the polyproteins occurs within the particle and proceeds by an ordered pathway, called maturation. First, the protease (PR) is released by autocatalytic cleavage of the Gag-Pol polyprotein yielding capsid protein p45 and a Pol-p154 precursor protein. This cleavage is a prerequisite for subsequent processing of Pol-p154 at the remaining sites to release the mature structural and catalytic proteins. Maturation takes place prior to the RT reaction and is required to produce transposition-competent VLPs.

It localises to the cytoplasm. Its subcellular location is the nucleus. The catalysed reaction is DNA(n) + a 2'-deoxyribonucleoside 5'-triphosphate = DNA(n+1) + diphosphate. The enzyme catalyses Endonucleolytic cleavage to 5'-phosphomonoester.. Functionally, capsid protein (CA) is the structural component of the virus-like particle (VLP), forming the shell that encapsulates the retrotransposons dimeric RNA genome. The particles are assembled from trimer-clustered units and there are holes in the capsid shells that allow for the diffusion of macromolecules. CA also has nucleocapsid-like chaperone activity, promoting primer tRNA(i)-Met annealing to the multipartite primer-binding site (PBS), dimerization of Ty1 RNA and initiation of reverse transcription. The aspartyl protease (PR) mediates the proteolytic cleavages of the Gag and Gag-Pol polyproteins after assembly of the VLP. Its function is as follows. Reverse transcriptase/ribonuclease H (RT) is a multifunctional enzyme that catalyzes the conversion of the retro-elements RNA genome into dsDNA within the VLP. The enzyme displays a DNA polymerase activity that can copy either DNA or RNA templates, and a ribonuclease H (RNase H) activity that cleaves the RNA strand of RNA-DNA heteroduplexes during plus-strand synthesis and hydrolyzes RNA primers. The conversion leads to a linear dsDNA copy of the retrotransposon that includes long terminal repeats (LTRs) at both ends. In terms of biological role, integrase (IN) targets the VLP to the nucleus, where a subparticle preintegration complex (PIC) containing at least integrase and the newly synthesized dsDNA copy of the retrotransposon must transit the nuclear membrane. Once in the nucleus, integrase performs the integration of the dsDNA into the host genome. This is Transposon Ty1-GR2 Gag-Pol polyprotein (TY1B-GR2) from Saccharomyces cerevisiae (strain ATCC 204508 / S288c) (Baker's yeast).